A 152-amino-acid polypeptide reads, in one-letter code: Clitocypin-4/-3 (152 aa).

It belongs to the protease inhibitor I48 family. In terms of assembly, homodimer.

Binds and inhibits cysteine proteinases. Inhibits most strongly papain and cathepsin L, more weakly bromelain and cathepsin B while it is completely ineffective against cathepsin H. The protein is Clitocypin-4/-3 (clt4) of Clitocybe nebularis (Clouded agaric).